The following is a 364-amino-acid chain: Aminomethyltransferase (364 aa).

Belongs to the GcvT family. The glycine cleavage system is composed of four proteins: P, T, L and H.

It catalyses the reaction N(6)-[(R)-S(8)-aminomethyldihydrolipoyl]-L-lysyl-[protein] + (6S)-5,6,7,8-tetrahydrofolate = N(6)-[(R)-dihydrolipoyl]-L-lysyl-[protein] + (6R)-5,10-methylene-5,6,7,8-tetrahydrofolate + NH4(+). Its function is as follows. The glycine cleavage system catalyzes the degradation of glycine. The protein is Aminomethyltransferase of Escherichia coli O81 (strain ED1a).